Consider the following 174-residue polypeptide: Ribosome maturation factor RimP (174 aa).

The protein belongs to the RimP family.

It localises to the cytoplasm. Functionally, required for maturation of 30S ribosomal subunits. This chain is Ribosome maturation factor RimP, found in Acinetobacter baumannii (strain SDF).